Reading from the N-terminus, the 759-residue chain is TIR domain-containing adapter molecule 1 (759 aa).

Residues 1–153 are TRIF-NTD; the sequence is MACTGPSLSG…CGWDVLGDLG (153 aa). The TRAF6-binding signature appears at 84–91; sequence ETPEEPPD. The pLxIS motif motif lies at 207–210; that stretch reads LEIS. The residue at position 210 (S210) is a Phosphoserine. Residue K229 forms a Glycyl lysine isopeptide (Lys-Gly) (interchain with G-Cter in ubiquitin) linkage. Residues 241–296 are disordered; sequence EPAPMGCQEPEEMSWPPSVEAADSPVRPSSPGPGLPEVTTDACPASPHDPPEVPEI. Short sequence motifs (TRAF6-binding) lie at residues 248-255 and 299-309; these read QEPEEMSW and HYPVECTDVPA. Positions 340–426 are disordered; the sequence is LSAQPRPPTP…PEPPPPELES (87 aa). Residues 351–365 show a composition bias toward low complexity; sequence VPQTSPSFPSASTSP. A compositionally biased stretch (pro residues) spans 366–376; that stretch reads FPSPSTPPEAH. The TIR domain occupies 430–590; sequence KFYNFVVLHA…QDARALREQS (161 aa). The sufficient to induce apoptosis stretch occupies residues 549–759; the sequence is LLDEHSKIFA…APEDNTRETE (211 aa). Residues 642 to 723 form a disordered region; it reads GQGSLGTPPS…PPARPQSPGL (82 aa). The segment covering 659-705 has biased composition (pro residues); the sequence is HQPPPLPPWLGGTPPPIFPQPPQTFPQPPPTFPQPPPTFQQPPPACP.

Homodimer. Found in a multi-helicase-TICAM1 complex at least composed of DHX36, DDX1, DDX21 and TICAM1; this complex exists in resting cells with or without poly(I:C) RNA ligand stimulation. Interacts (via TIR domain) with DDX21 (via C-terminus). Interacts (via TIR domain) with DHX36 (via C-terminus). Interacts with AZI2 and IRF7. Interacts with TICAM2 in TLR4 recruitment. Interaction with PIAS4 inhibits the TICAM1-induced NF-kappa-B, IRF and IFNB1 activation. Interacts with IKBKB and IKBKE. Interaction with SARM1 blocks TICAM1-dependent transcription factor activation. Interacts with TRAF3. Interacts (when phosphorylated) with IRF3; following activation and phosphorylation on the pLxIS motif by TBK1, recruits IRF3. Interacts with TBK1, TRAF6 and RIPK1 and these interactions are enhanced in the presence of WDFY1. Interacts with TRAFD1. Interacts with UBQLN1 (via UBA domain). Interacts with TLR4 in response to LPS in a WDFY1-dependent manner. Interacts with WDFY1 in response to poly(I:C). Interacts (via the TIR domain) with TLR3 in response to poly(I:C) and this interaction is enhanced in the presence of WDFY1. Interacts with TRIM56. Component of a multi-helicase-TICAM1 complex that acts as a cytoplasmic sensor of viral double-stranded RNA (dsRNA) and plays a role in the activation of a cascade of antiviral responses including the induction of pro-inflammatory cytokines. Interacts (via the TIR domain) with TLR5. Interacts with TRIM8. Interacts with TAX1BP1 and TRIM32; these interactions target TICAM1 to TAX1BP1-mediated selective autophagic degradation. Interacts with DDX50. Phosphorylated by TBK1. Following activation, phosphorylated by TBK1 at Ser-210 in the pLxIS motif. The phosphorylated pLxIS motif constitutes an IRF3-binding motif, leading to recruitment of the transcription factor IRF3 to induce type-I interferons and other cytokines. In terms of processing, polyubiquitinated at Lys-229 by TRIM38 with 'Lys-48'-linked chains, leading to proteasomal degradation. Polyubiquitinated with 'Lys-6' and 'Lys-33'-linked chains in a TRIM8-dependent manner.

It is found in the cytoplasmic vesicle. The protein resides in the autophagosome. It localises to the cytoplasm. Its subcellular location is the cytosol. The protein localises to the mitochondrion. Functionally, involved in innate immunity against invading pathogens. Adapter used by TLR3, TLR4 (through TICAM2) and TLR5 to mediate NF-kappa-B and interferon-regulatory factor (IRF) activation, and to induce apoptosis. Ligand binding to these receptors results in TRIF recruitment through its TIR domain. Distinct protein-interaction motifs allow recruitment of the effector proteins TBK1, TRAF6 and RIPK1, which in turn, lead to the activation of transcription factors IRF3 and IRF7, NF-kappa-B and FADD respectively. Phosphorylation by TBK1 on the pLxIS motif leads to recruitment and subsequent activation of the transcription factor IRF3 to induce expression of type I interferon and exert a potent immunity against invading pathogens. Component of a multi-helicase-TICAM1 complex that acts as a cytoplasmic sensor of viral double-stranded RNA (dsRNA) and plays a role in the activation of a cascade of antiviral responses including the induction of pro-inflammatory cytokines. This chain is TIR domain-containing adapter molecule 1 (TICAM1), found in Bos taurus (Bovine).